We begin with the raw amino-acid sequence, 205 residues long: MSSDHRDQYYWRAKRDQFRSRAAYKLEFLIERYGIIKDGQAVLEIGSSPGGWTQVLVDHGCRVVAVDIQPMDEIPGVIFLKLNILREDAAERIREEMARSLVQRFDVVLSDAMAKTSGIRSSDHAASVMIGNAVMKIAMDTLRRGGVAVVKQFQGDMTGDFIKNWGHYFRDHRITKPPASRKESSEVYIIFYGFSGKETDNSVQG.

S-adenosyl-L-methionine is bound by residues G50, W52, D67, N83, and D111. K151 serves as the catalytic Proton acceptor.

Belongs to the class I-like SAM-binding methyltransferase superfamily. RNA methyltransferase RlmE family.

It is found in the cytoplasm. It catalyses the reaction uridine(2552) in 23S rRNA + S-adenosyl-L-methionine = 2'-O-methyluridine(2552) in 23S rRNA + S-adenosyl-L-homocysteine + H(+). Functionally, specifically methylates the uridine in position 2552 of 23S rRNA at the 2'-O position of the ribose in the fully assembled 50S ribosomal subunit. In Thermoplasma acidophilum (strain ATCC 25905 / DSM 1728 / JCM 9062 / NBRC 15155 / AMRC-C165), this protein is Ribosomal RNA large subunit methyltransferase E.